A 292-amino-acid polypeptide reads, in one-letter code: Nucleophosmin (292 aa).

Met-1 carries the N-acetylmethionine modification. Positions 1-117 (MEDSMDMDMS…PVHISGQHLV (117 aa)) are necessary for interaction with APEX1. Positions 1–185 (MEDSMDMDMS…DDDDFDEEET (185 aa)) are required for interaction with SENP3. Ser-4 is modified (phosphoserine; by PLK1 and PLK2). At Ser-10 the chain carries Phosphoserine. Lys-27 participates in a covalent cross-link: Glycyl lysine isopeptide (Lys-Gly) (interchain with G-Cter in SUMO2). At Lys-32 the chain carries N6-acetyllysine; alternate. Residue Lys-32 forms a Glycyl lysine isopeptide (Lys-Gly) (interchain with G-Cter in SUMO1); alternate linkage. Lys-32 is covalently cross-linked (Glycyl lysine isopeptide (Lys-Gly) (interchain with G-Cter in SUMO2); alternate). Position 43 is a phosphoserine (Ser-43). Tyr-67 carries the phosphotyrosine modification. A Phosphoserine modification is found at Ser-70. Residues Thr-75 and Thr-95 each carry the phosphothreonine modification. Residues Ser-125 and Ser-139 each carry the phosphoserine modification. A disordered region spans residues 138–248 (MSGKRSAPGG…PSSVEDIKAK (111 aa)). Lys-141 is covalently cross-linked (Glycyl lysine isopeptide (Lys-Gly) (interchain with G-Cter in SUMO2)). Lys-150 bears the N6-acetyllysine; alternate mark. A Glycyl lysine isopeptide (Lys-Gly) (interchain with G-Cter in SUMO2); alternate cross-link involves residue Lys-150. The short motif at 152-157 (PQKKVK) is the Nuclear localization signal element. Residue Lys-154 is modified to N6-acetyllysine. A compositionally biased stretch (acidic residues) spans 159-186 (DEDDEDDDEDDEDDEDDDDDDFDEEETE). Residues 186–214 (EEKVPVKKSVRDTPAKNAQKSNQNGKDLK) are interaction with NOP2. The segment covering 187–199 (EKVPVKKSVRDTP) has biased composition (basic and acidic residues). The Nuclear localization signal motif lies at 190–196 (PVKKSVR). Thr-198 bears the Phosphothreonine; by CDK1 and CDK2 mark. The span at 201–210 (KNAQKSNQNG) shows a compositional bias: polar residues. Residue Ser-206 is modified to ADP-ribosylserine. At Lys-211 the chain carries N6-acetyllysine. Residue Lys-214 forms a Glycyl lysine isopeptide (Lys-Gly) (interchain with G-Cter in SUMO2) linkage. Position 217 is a phosphothreonine; by CDK1 (Thr-217). Over residues 221 to 233 (KGQESFKKQEKTP) the composition is skewed to basic and acidic residues. Ser-225 is subject to Phosphoserine. Lys-227 bears the N6-acetyllysine mark. Lys-228 is modified (N6-acetyllysine; alternate). Lys-228 participates in a covalent cross-link: Glycyl lysine isopeptide (Lys-Gly) (interchain with G-Cter in SUMO); alternate. Thr-232 and Thr-235 each carry phosphothreonine; by CDK1. Ser-240 and Ser-241 each carry phosphoserine. Residues 241–292 (SVEDIKAKMQASIEKGGSLPKVEAKFINYVKNCFRMTDQEAIQDLWQWRKSL) form a required for nucleolar localization region. Lys-246 is covalently cross-linked (Glycyl lysine isopeptide (Lys-Gly) (interchain with G-Cter in SUMO1); alternate). Glycyl lysine isopeptide (Lys-Gly) (interchain with G-Cter in SUMO2); alternate cross-links involve residues Lys-246 and Lys-248. Lys-248 is modified (N6-acetyllysine; alternate). The residue at position 252 (Ser-252) is a Phosphoserine. Lys-255 is modified (N6-acetyllysine; alternate). Lys-255 participates in a covalent cross-link: Glycyl lysine isopeptide (Lys-Gly) (interchain with G-Cter in SUMO1); alternate. Lys-255 is covalently cross-linked (Glycyl lysine isopeptide (Lys-Gly) (interchain with G-Cter in SUMO2); alternate). At Ser-258 the chain carries Phosphoserine. Residues Lys-261, Lys-265, and Lys-271 each participate in a glycyl lysine isopeptide (Lys-Gly) (interchain with G-Cter in SUMO2); alternate cross-link. Lys-261 participates in a covalent cross-link: Glycyl lysine isopeptide (Lys-Gly) (interchain with G-Cter in SUMO); alternate. An N6-acetyllysine; alternate mark is found at Lys-265 and Lys-271. Lys-265 is covalently cross-linked (Glycyl lysine isopeptide (Lys-Gly) (interchain with G-Cter in SUMO1); alternate). At Lys-265 the chain carries N6-succinyllysine; alternate. Residue Thr-277 is modified to Phosphothreonine. An N6-acetyllysine modification is found at Lys-290.

Belongs to the nucleoplasmin family. In terms of assembly, decamer formed by two pentameric rings associated in a head-to-head fashion. Disulfide-linked dimers under certain conditions. Interacts with NSUN2 and SENP3. The SWAP complex consists of NPM1, NCL, PARP1 and SWAP70. Interacts with the methylated form of RPS10. Interacts (via N-terminal domain) with APEX1; the interaction is RNA-dependent and decreases peroxide-damaged cells. Interacts with NEK2. Interacts with ROCK2 and BRCA2. Interacts with RPGR. Interacts with CENPW. Interacts with EIF2AK2/PKR. Interacts with DDX31; this interaction prevents interaction between NPM1 and HDM2. Interacts with MYC; competitive with NOP53. Interacts with NOP53; the interaction is direct and competitive with MYC. Interacts with LRRC34. Interacts with RRP1B. Interacts with NPM3. Interacts with ALKBH2. Interacts with TTF1 (via C-terminal region). Interacts with NOP2. Interacts with ARID3C (via REKLES DOMAIN); the interaction mediates ARID3C nuclear shuttling. In terms of processing, acetylated at C-terminal lysine residues, thereby increasing affinity to histones. ADP-ribosylated. Post-translationally, phosphorylated at Ser-4 by PLK1 and PLK2. Phosphorylation at Ser-4 by PLK2 in S phase is required for centriole duplication and is sufficient to trigger centriole replication. Phosphorylation at Ser-4 by PLK1 takes place during mitosis. Phosphorylated by CDK2 at Ser-125 and Thr-198. Phosphorylation at Thr-198 may trigger initiation of centrosome duplication. Phosphorylated by CDK1 at Thr-198, Thr-217, Thr-232 and Thr-235 during cell mitosis. When these four sites are phosphorated, RNA-binding activity seem to be abolished. May be phosphorylated at Ser-70 by NEK2. The Thr-198 phosphorylated form has higher affinity for ROCK2. In terms of processing, sumoylated by ARF. Ubiquitinated. Ubiquitination leads to proteasomal degradation. Deubiquitinated by USP36. In terms of tissue distribution, expressed in B-cells that have been induced to switch to various Ig isotypes.

It is found in the nucleus. Its subcellular location is the nucleolus. The protein resides in the nucleoplasm. The protein localises to the cytoplasm. It localises to the cytoskeleton. It is found in the microtubule organizing center. Its subcellular location is the centrosome. Its function is as follows. Involved in diverse cellular processes such as ribosome biogenesis, centrosome duplication, protein chaperoning, histone assembly, cell proliferation, and regulation of tumor suppressors p53/TP53 and ARF. Binds ribosome presumably to drive ribosome nuclear export. Associated with nucleolar ribonucleoprotein structures and bind single-stranded nucleic acids. Acts as a chaperonin for the core histones H3, H2B and H4. Stimulates APEX1 endonuclease activity on apurinic/apyrimidinic (AP) double-stranded DNA but inhibits APEX1 endonuclease activity on AP single-stranded RNA. May exert a control of APEX1 endonuclease activity within nucleoli devoted to repair AP on rDNA and the removal of oxidized rRNA molecules. In concert with BRCA2, regulates centrosome duplication. Regulates centriole duplication: phosphorylation by PLK2 is able to trigger centriole replication. Negatively regulates the activation of EIF2AK2/PKR and suppresses apoptosis through inhibition of EIF2AK2/PKR autophosphorylation. Antagonizes the inhibitory effect of ATF5 on cell proliferation and relieves ATF5-induced G2/M blockade. In complex with MYC enhances the transcription of MYC target genes. May act as chaperonin or cotransporter in the nucleolar localization of transcription termination factor TTF1. The polypeptide is Nucleophosmin (Npm1) (Mus musculus (Mouse)).